The following is a 411-amino-acid chain: Probable tRNA pseudouridine synthase D (411 aa).

Catalysis depends on Asp79, which acts as the Nucleophile. Residues 150-369 (GFPNYFGQQR…STGDRRIVSA (220 aa)) enclose the TRUD domain.

It belongs to the pseudouridine synthase TruD family.

The catalysed reaction is uridine(13) in tRNA = pseudouridine(13) in tRNA. Its function is as follows. Could be responsible for synthesis of pseudouridine from uracil-13 in transfer RNAs. The protein is Probable tRNA pseudouridine synthase D of Thermoplasma acidophilum (strain ATCC 25905 / DSM 1728 / JCM 9062 / NBRC 15155 / AMRC-C165).